The sequence spans 386 residues: Meiotic chromosome segregation protein C1539.02 (386 aa).

Disordered stretches follow at residues methionine 1 to serine 28, arginine 46 to glutamine 85, and aspartate 366 to glycine 386. Polar residues predominate over residues alanine 15–serine 28.

It is found in the nucleus. In terms of biological role, required for meiotic chromosome segregation. The protein is Meiotic chromosome segregation protein C1539.02 of Schizosaccharomyces pombe (strain 972 / ATCC 24843) (Fission yeast).